Reading from the N-terminus, the 310-residue chain is Ribose-phosphate pyrophosphokinase (310 aa).

ATP-binding positions include 33 to 35 and 92 to 93; these read DGE and RQ. Mg(2+)-binding residues include histidine 127 and aspartate 166. Lysine 189 is a catalytic residue. D-ribose 5-phosphate-binding positions include arginine 191, aspartate 215, and 219-223; that span reads DTAGT.

It belongs to the ribose-phosphate pyrophosphokinase family. Class I subfamily. In terms of assembly, homohexamer. Mg(2+) is required as a cofactor.

It localises to the cytoplasm. It catalyses the reaction D-ribose 5-phosphate + ATP = 5-phospho-alpha-D-ribose 1-diphosphate + AMP + H(+). The protein operates within metabolic intermediate biosynthesis; 5-phospho-alpha-D-ribose 1-diphosphate biosynthesis; 5-phospho-alpha-D-ribose 1-diphosphate from D-ribose 5-phosphate (route I): step 1/1. Functionally, involved in the biosynthesis of the central metabolite phospho-alpha-D-ribosyl-1-pyrophosphate (PRPP) via the transfer of pyrophosphoryl group from ATP to 1-hydroxyl of ribose-5-phosphate (Rib-5-P). In Bordetella parapertussis (strain 12822 / ATCC BAA-587 / NCTC 13253), this protein is Ribose-phosphate pyrophosphokinase.